Here is a 47-residue protein sequence, read N- to C-terminus: MAFEEAIKRVFMKKICMKCNSRNSWKATKCRKCGYTNLRPKAKEARA.

It belongs to the eukaryotic ribosomal protein eL40 family.

The polypeptide is Large ribosomal subunit protein eL40 (Methanococcus maripaludis (strain C5 / ATCC BAA-1333)).